The following is a 175-amino-acid chain: MMTYIVFILSIIFVVSFVGFSSKPSPIYGGLVLIISGAVGCGIVLSFGGSFLGLMVFLIYLGGMLVVFGYTTAMAIEQYPEVWVSNKAVLGAFVMGLLSELLLACYILKDDEVDVVFEFNGMGDWVIYDTGDSGFFSEEAMGIAALYSYGTWLVIVTGWSLLTGVLVIMEVTRGN.

5 consecutive transmembrane segments (helical) span residues 1 to 21, 25 to 45, 47 to 67, 88 to 108, and 149 to 169; these read MMTY…VGFS, SPIY…GIVL, FGGS…MLVV, AVLG…CYIL, and YGTW…LVIM.

Belongs to the complex I subunit 6 family. Core subunit of respiratory chain NADH dehydrogenase (Complex I) which is composed of 45 different subunits.

It localises to the mitochondrion inner membrane. The catalysed reaction is a ubiquinone + NADH + 5 H(+)(in) = a ubiquinol + NAD(+) + 4 H(+)(out). Core subunit of the mitochondrial membrane respiratory chain NADH dehydrogenase (Complex I) which catalyzes electron transfer from NADH through the respiratory chain, using ubiquinone as an electron acceptor. Essential for the catalytic activity and assembly of complex I. This Phoca vitulina (Harbor seal) protein is NADH-ubiquinone oxidoreductase chain 6 (MT-ND6).